The sequence spans 82 residues: U-actitoxin-Oulsp2 (82 aa).

Positions 1–21 (MNTKLVVVFLLSAILFVSVTA) are cleaved as a signal peptide. Positions 22 to 46 (SRPGKDLERDEAYETYDDERPYFKR) are excised as a propeptide. A ShKT domain is found at 48-82 (CKDNLPAATCSNVKANNNCSSEKYKTNCAKTCGEC). Cystine bridges form between Cys48–Cys82, Cys57–Cys75, and Cys66–Cys79. Residues 70 to 71 (KY) form a theoritically crucial for binding to potassium channels region.

It belongs to the sea anemone type 1 potassium channel toxin family. Type 1b subfamily.

The protein localises to the secreted. Its subcellular location is the nematocyst. Its function is as follows. Probable toxin with unknown function. In contrast to similar toxins, this toxin does not inhibit voltage-gated potassium channels (tested at 100 nM). Does not show antimicrobial activities against bacteria and yeasts. In Oulactis sp. (Sea anemone), this protein is U-actitoxin-Oulsp2.